The chain runs to 929 residues: Diacylglycerol kinase zeta (929 aa).

Positions 1-14 are enriched in basic and acidic residues; that stretch reads MEPRDPSPEARSSD. Disordered regions lie at residues 1 to 46 and 59 to 80; these read MEPR…RRFP and KSGL…GESE. Over residues 15–24 the composition is skewed to low complexity; that stretch reads SESASASSSG. Positions 25–37 are enriched in basic and acidic residues; it reads SERDADPEPDKAP. Phorbol-ester/DAG-type zinc fingers lie at residues 98–153 and 173–231; these read HIWF…NFRC and HHWV…EEPC. A disordered region spans residues 257-281; the sequence is KASKKKKRASFKRRSSKKGPEEGRW. The segment covering 258–273 has biased composition (basic residues); that stretch reads ASKKKKRASFKRRSSK. The interval 279–417 is mediates interaction with RASGRP1; the sequence is GRWRPFIIRP…HVEEGNVVQL (139 aa). Residues 292–426 enclose the DAGKc domain; sequence PLMKPLLVFV…LDRWDLRAEP (135 aa). The short motif at 362–370 is the Nuclear export signal element; it reads LSTLDQLRL. A disordered region spans residues 421 to 441; the sequence is DLRAEPNPEAGPEERDDGATD. At serine 706 the chain carries Phosphoserine. The interval 760-783 is disordered; sequence ARPDLPTPTSPLPASPCSPTPGSL. The segment covering 764-778 has biased composition (pro residues); sequence LPTPTSPLPASPCSP. Serine 782 is modified (phosphoserine). ANK repeat units lie at residues 823 to 853 and 858 to 887; these read QSRT…EILD and NGET…SLMK. The PDZ-binding motif lies at 925–929; sequence QETAV.

It belongs to the eukaryotic diacylglycerol kinase family. In terms of assembly, interacts (via PDZ-binding motif) with the PDZ domain of the syntrophin SNTG1 and that of SNX27. Interacts with IRS1 in the absence of insulin; insulin stimulation decreases this interaction. Found in a ternary complex with IRS1 and PIP5K1A in the absence of insulin. Interacts with PIP5K1A. Forms a signaling complex with RASGRP1 and HRAS.

It localises to the nucleus. Its subcellular location is the cytoplasm. It is found in the cytosol. The protein resides in the cell membrane. The protein localises to the cell projection. It localises to the lamellipodium. The catalysed reaction is a 1,2-diacyl-sn-glycerol + ATP = a 1,2-diacyl-sn-glycero-3-phosphate + ADP + H(+). It catalyses the reaction a 1-O-alkyl-sn-glycerol + ATP = a 1-O-alkyl-sn-glycero-3-phosphate + ADP + H(+). It carries out the reaction 1-O-alkyl-2-acyl-sn-glycerol + ATP = 1-O-alkyl-2-acyl-sn-glycero-3-phosphate + ADP + H(+). The enzyme catalyses 1,2-didecanoyl-sn-glycerol + ATP = 1,2-didecanoyl-sn-glycero-3-phosphate + ADP + H(+). The catalysed reaction is 1,2-ditetradecanoyl-sn-glycerol + ATP = 1,2-ditetradecanoyl-sn-glycero-3-phosphate + ADP + H(+). It catalyses the reaction 1-hexadecanoyl-2-(9Z-octadecenoyl)-sn-glycerol + ATP = 1-hexadecanoyl-2-(9Z-octadecenoyl)-sn-glycero-3-phosphate + ADP + H(+). It carries out the reaction 1-hexadecanoyl-2-(5Z,8Z,11Z,14Z-eicosatetraenoyl)-sn-glycerol + ATP = 1-hexadecanoyl-2-(5Z,8Z,11Z,14Z-eicosatetraenoyl)-sn-glycero-3-phosphate + ADP + H(+). The enzyme catalyses 1-octadecanoyl-2-(9Z-octadecenoyl)-sn-glycerol + ATP = 1-octadecanoyl-2-(9Z-octadecenoyl)-sn-glycero-3-phosphate + ADP + H(+). The catalysed reaction is 1-octadecanoyl-2-(5Z,8Z,11Z,14Z-eicosatetraenoyl)-sn-glycerol + ATP = 1-octadecanoyl-2-(5Z,8Z,11Z,14Z-eicosatetraenoyl)-sn-glycero-3-phosphate + ADP + H(+). It catalyses the reaction 1-octadecanoyl-2-(4Z,7Z,10Z,13Z,16Z,19Z-docosahexaenoyl)-sn-glycerol + ATP = 1-octadecanoyl-2-(4Z,7Z,10Z,13Z,16Z,19Z-docosahexaenoyl)-sn-glycero-3-phosphate + ADP + H(+). It carries out the reaction 1,2-di-(9Z-octadecenoyl)-sn-glycerol + ATP = 1,2-di-(9Z-octadecenoyl)-sn-glycero-3-phosphate + ADP + H(+). The enzyme catalyses 1-(9Z-octadecenoyl)-2-hexadecanoyl-sn-glycerol + ATP = 1-(9Z)-octadecenoyl-2-hexadecanoyl-sn-glycero-3-phosphate + ADP + H(+). The catalysed reaction is 1-eicosanoyl-2-(5Z,8Z,11Z,14Z)-eicosatetraenoyl-sn-glycerol + ATP = 1-eicosanoyl-2-(5Z,8Z,11Z,14Z)-eicosatetraenoyl-sn-glycero-3-phosphate + ADP + H(+). It catalyses the reaction 1,2-di-(5Z,8Z,11Z,14Z)-eicosatetraenoyl-sn-glycerol + ATP = 1,2-di-(5Z,8Z,11Z,14Z)-eicosatetraenoyl-sn-glycero-3-phosphate + ADP + H(+). It carries out the reaction 1-O-hexadecyl-2-acetyl-sn-glycerol + ATP = 1-O-hexadecyl-2-acetyl-sn-glycero-3-phosphate + ADP + H(+). The enzyme catalyses 1-O-hexadecyl-2-(5Z,8Z,11Z,14Z-eicosatetraenoyl)-sn-glycerol + ATP = 1-O-hexadecyl-2-(5Z,8Z,11Z,14Z-eicosatetraenoyl)-sn-glycero-3-phosphate + ADP + H(+). The catalysed reaction is 1-O-hexadecyl-2-(9Z-octadecenoyl)-sn-glycerol + ATP = 1-O-hexadecyl-2-(9Z-octadecenoyl)-sn-glycero-3-phosphate + ADP + H(+). It catalyses the reaction 1-O-hexadecyl-sn-glycerol + ATP = 1-O-hexadecyl-sn-glycero-3-phosphate + ADP + H(+). The protein operates within lipid metabolism; glycerolipid metabolism. In terms of biological role, diacylglycerol kinase that converts diacylglycerol/DAG into phosphatidic acid/phosphatidate/PA and regulates the respective levels of these two bioactive lipids. Thereby, acts as a central switch between the signaling pathways activated by these second messengers with different cellular targets and opposite effects in numerous biological processes. Also plays an important role in the biosynthesis of complex lipids. Does not exhibit an acyl chain-dependent substrate specificity among diacylglycerol species. Can also phosphorylate 1-alkyl-2-acylglycerol in vitro but less efficiently and with a preference for alkylacylglycerols containing an arachidonoyl group. The biological processes it is involved in include T cell activation since it negatively regulates T-cell receptor signaling which is in part mediated by diacylglycerol. By generating phosphatidic acid, stimulates PIP5KIA activity which regulates actin polymerization. Through the same mechanism could also positively regulate insulin-induced translocation of SLC2A4 to the cell membrane. Regulates RASGRP1 activity. In Rattus norvegicus (Rat), this protein is Diacylglycerol kinase zeta.